Here is a 245-residue protein sequence, read N- to C-terminus: Ribosomal RNA small subunit methyltransferase G (245 aa).

S-adenosyl-L-methionine-binding positions include Gly-90, Leu-95, 140–141 (AE), and Arg-158.

The protein belongs to the methyltransferase superfamily. RNA methyltransferase RsmG family.

The protein resides in the cytoplasm. Specifically methylates the N7 position of guanine in position 518 of 16S rRNA. The polypeptide is Ribosomal RNA small subunit methyltransferase G (Mycobacterium leprae (strain TN)).